Reading from the N-terminus, the 343-residue chain is Multidrug resistance protein MdtN (343 aa).

At 1-12 the chain is on the cytoplasmic side; it reads MESTPKKAPRSK. The helical; Signal-anchor for type II membrane protein transmembrane segment at 13–33 threads the bilayer; that stretch reads FPALLVVALALVALVFVIWRV. Residues 34 to 343 lie on the Periplasmic side of the membrane; that stretch reads DSAPSTNDAY…ASAVANLEPQ (310 aa).

The protein belongs to the membrane fusion protein (MFP) (TC 8.A.1) family. In terms of assembly, could be part of a tripartite efflux system composed of MdtN, MdtO and MdtP.

The protein localises to the cell inner membrane. In terms of biological role, could be involved in resistance to puromycin, acriflavine and tetraphenylarsonium chloride. In Escherichia coli (strain K12), this protein is Multidrug resistance protein MdtN (mdtN).